The primary structure comprises 1441 residues: Tripeptidyl-peptidase 2 (1441 aa).

Residues 62–89 (AESSERSNSSKKTTNKEQSDKSAESRMA) are disordered. Residues 75 to 85 (TNKEQSDKSAE) show a composition bias toward basic and acidic residues. The Peptidase S8 domain maps to 107-608 (ETGVLNFLQK…HGLLNVEKAF (502 aa)). Catalysis depends on charge relay system residues Asp131, His359, and Ser549. The span at 1139–1155 (TANGAKPKAPATPQAAT) shows a compositional bias: low complexity. 2 disordered regions span residues 1139-1190 (TANG…KANA) and 1255-1274 (QKTSPPEAGESADKQKEDQK). A Phosphoserine modification is found at Ser1182. Residues 1265–1274 (SADKQKEDQK) show a composition bias toward basic and acidic residues.

It belongs to the peptidase S8 family. Homooligomer; forms a complex of 6 MDa probably composed of 40 subunits. Forms a structure consisting of 2 segmented and twisted strands that form a spindle-shaped structure. Each strand is composed of 10 segments (a segment being a homodimer oriented head to head), stacking of these segments leads to the formation of a twisted single strand. 2 strands compose the fully assembled spindle.

The protein resides in the cytoplasm. It catalyses the reaction Release of an N-terminal tripeptide from a polypeptide.. Its activity is regulated as follows. Inhibited by phenylmethanesulfonyl fluoride (PMSF) and butabindide, but not by peptidase inhibitor pepstatin, EDTA, nor bestatin. Functionally, component of the proteolytic cascade acting downstream of the 26S proteasome in the ubiquitin-proteasome pathway. Efficiently cleaves Ala-Ala-Ala-polypeptide and Pro-Pro-Ala-polypeptide, Val-Leu-Lys-polypeptide only at high concentration. Does not cleave Ala-Phe-Pro-polypeptide nor Pro-Leu-Gly-polypeptide. The polypeptide is Tripeptidyl-peptidase 2 (TppII) (Drosophila melanogaster (Fruit fly)).